We begin with the raw amino-acid sequence, 263 residues long: Putative S-adenosyl-L-methionine-dependent methyltransferase Mkms_0098 (263 aa).

S-adenosyl-L-methionine-binding positions include Asp-121 and 150-151 (ES).

It belongs to the UPF0677 family.

Its function is as follows. Exhibits S-adenosyl-L-methionine-dependent methyltransferase activity. The chain is Putative S-adenosyl-L-methionine-dependent methyltransferase Mkms_0098 from Mycobacterium sp. (strain KMS).